Reading from the N-terminus, the 375-residue chain is Succinyl-diaminopimelate desuccinylase (375 aa).

Position 66 (H66) interacts with Zn(2+). D68 is a catalytic residue. D99 contributes to the Zn(2+) binding site. Residue E133 is the Proton acceptor of the active site. The Zn(2+) site is built by E134, E162, and H348.

The protein belongs to the peptidase M20A family. DapE subfamily. Homodimer. Requires Zn(2+) as cofactor. The cofactor is Co(2+).

The enzyme catalyses N-succinyl-(2S,6S)-2,6-diaminopimelate + H2O = (2S,6S)-2,6-diaminopimelate + succinate. Its pathway is amino-acid biosynthesis; L-lysine biosynthesis via DAP pathway; LL-2,6-diaminopimelate from (S)-tetrahydrodipicolinate (succinylase route): step 3/3. In terms of biological role, catalyzes the hydrolysis of N-succinyl-L,L-diaminopimelic acid (SDAP), forming succinate and LL-2,6-diaminopimelate (DAP), an intermediate involved in the bacterial biosynthesis of lysine and meso-diaminopimelic acid, an essential component of bacterial cell walls. This Erwinia tasmaniensis (strain DSM 17950 / CFBP 7177 / CIP 109463 / NCPPB 4357 / Et1/99) protein is Succinyl-diaminopimelate desuccinylase.